Here is a 165-residue protein sequence, read N- to C-terminus: MGGYRVGLGVDVHAFADPAEGRQLVLGGVRIPSERGLRGHSDADVLAHAVTDALLGAAGLEDIGHYFPDTDERFRDADSIWLLREARRIVGGGWEVVNVDAVVICERPRIREHREKMRENLAAALGVEASRVSVRGTTSERLGFTGRGEGIAAQAVCLLERAVGT.

Residues Asp11 and His13 each coordinate a divalent metal cation. 4-CDP-2-C-methyl-D-erythritol 2-phosphate is bound by residues 11-13 (DVH) and 40-41 (HS). His48 lines the a divalent metal cation pocket. Residues 62–64 (DIG), 67–71 (FPDTD), 137–140 (TTSE), Phe144, and Arg147 each bind 4-CDP-2-C-methyl-D-erythritol 2-phosphate.

This sequence belongs to the IspF family. Homotrimer. Requires a divalent metal cation as cofactor.

It catalyses the reaction 4-CDP-2-C-methyl-D-erythritol 2-phosphate = 2-C-methyl-D-erythritol 2,4-cyclic diphosphate + CMP. It functions in the pathway isoprenoid biosynthesis; isopentenyl diphosphate biosynthesis via DXP pathway; isopentenyl diphosphate from 1-deoxy-D-xylulose 5-phosphate: step 4/6. Involved in the biosynthesis of isopentenyl diphosphate (IPP) and dimethylallyl diphosphate (DMAPP), two major building blocks of isoprenoid compounds. Catalyzes the conversion of 4-diphosphocytidyl-2-C-methyl-D-erythritol 2-phosphate (CDP-ME2P) to 2-C-methyl-D-erythritol 2,4-cyclodiphosphate (ME-CPP) with a corresponding release of cytidine 5-monophosphate (CMP). The sequence is that of 2-C-methyl-D-erythritol 2,4-cyclodiphosphate synthase from Rubrobacter xylanophilus (strain DSM 9941 / JCM 11954 / NBRC 16129 / PRD-1).